Here is a 1441-residue protein sequence, read N- to C-terminus: Tripeptidyl-peptidase 2 (1441 aa).

The interval 62–89 (AESSERSNSSKKTTNKEQSDKSAESRMA) is disordered. The segment covering 75–85 (TNKEQSDKSAE) has biased composition (basic and acidic residues). The Peptidase S8 domain occupies 107-608 (ETGVLNFLQK…HGLLNVEKAF (502 aa)). Catalysis depends on charge relay system residues Asp131, His359, and Ser549. The span at 1139-1155 (TANGAKPKAPATPQAAT) shows a compositional bias: low complexity. Disordered stretches follow at residues 1139-1190 (TANG…KANA) and 1255-1274 (QKTSPPEAGESADKQKEDQK). Residue Ser1182 is modified to Phosphoserine. Positions 1265–1274 (SADKQKEDQK) are enriched in basic and acidic residues.

Belongs to the peptidase S8 family. In terms of assembly, homooligomer; forms a complex of 6 MDa probably composed of 40 subunits. Forms a structure consisting of 2 segmented and twisted strands that form a spindle-shaped structure. Each strand is composed of 10 segments (a segment being a homodimer oriented head to head), stacking of these segments leads to the formation of a twisted single strand. 2 strands compose the fully assembled spindle.

The protein resides in the cytoplasm. The enzyme catalyses Release of an N-terminal tripeptide from a polypeptide.. Its activity is regulated as follows. Inhibited by phenylmethanesulfonyl fluoride (PMSF) and butabindide, but not by peptidase inhibitor pepstatin, EDTA, nor bestatin. Component of the proteolytic cascade acting downstream of the 26S proteasome in the ubiquitin-proteasome pathway. Efficiently cleaves Ala-Ala-Ala-polypeptide and Pro-Pro-Ala-polypeptide, Val-Leu-Lys-polypeptide only at high concentration. Does not cleave Ala-Phe-Pro-polypeptide nor Pro-Leu-Gly-polypeptide. The sequence is that of Tripeptidyl-peptidase 2 (TppII) from Drosophila melanogaster (Fruit fly).